A 504-amino-acid chain; its full sequence is 6,7,8-trihydroxycoumarin synthase (504 aa).

Residues 1–21 form a helical membrane-spanning segment; the sequence is MEPVFLFLILAFPIASVYLLF. The tract at residues 363 to 368 is substrate specificity; sequence PAPVLV. Cysteine 444 serves as a coordination point for heme.

This sequence belongs to the cytochrome P450 family. The cofactor is heme.

It is found in the microsome membrane. It functions in the pathway secondary metabolite biosynthesis. Involved in the biosynthesis of coumarins and furanocoumarins (FCs), natural products required for defense responses against attacks by predators with potential medical and agroindustrial usages such as anticoagulant, rodenticide and artificial vanilla substitutes. Able to catalyze the hydroxylation of esculetin to produce 6,7,8-trihydroxycoumarin. This Pastinaca sativa (Wild parsnip) protein is 6,7,8-trihydroxycoumarin synthase.